Here is a 125-residue protein sequence, read N- to C-terminus: Small ribosomal subunit protein bS6 (125 aa).

The disordered stretch occupies residues 99 to 125 (PSIMMKSVEREEARKASTEASAPAQAQ). Over residues 105–115 (SVEREEARKAS) the composition is skewed to basic and acidic residues. Residues 116-125 (TEASAPAQAQ) are compositionally biased toward polar residues.

This sequence belongs to the bacterial ribosomal protein bS6 family.

Binds together with bS18 to 16S ribosomal RNA. This chain is Small ribosomal subunit protein bS6, found in Bordetella petrii (strain ATCC BAA-461 / DSM 12804 / CCUG 43448).